The sequence spans 680 residues: Zinc finger protein 263 (680 aa).

Lys19 is covalently cross-linked (Glycyl lysine isopeptide (Lys-Gly) (interchain with G-Cter in SUMO2)). The SCAN box domain occupies 43 to 125 (HLRFRRFRFQ…TLVERMQKEL (83 aa)). Positions 147-191 (LPLETAGESPSFKLEPMETERSPGPRLQELLDPSPQRDSQAVKER) are disordered. Lys159 is covalently cross-linked (Glycyl lysine isopeptide (Lys-Gly) (interchain with G-Cter in SUMO2)). Ser168 and Ser180 each carry phosphoserine. Glycyl lysine isopeptide (Lys-Gly) (interchain with G-Cter in SUMO2) cross-links involve residues Lys286, Lys300, and Lys376. C2H2-type zinc fingers lie at residues 378 to 400 (HLCA…QRIH), 434 to 456 (HKCL…QRTH), 462 to 484 (FQCN…QRTH), 490 to 512 (YKCP…QRIH), and 518 to 540 (YRCS…ERTH). Glycyl lysine isopeptide (Lys-Gly) (interchain with G-Cter in SUMO2) cross-links involve residues Lys570 and Lys579. 4 C2H2-type zinc fingers span residues 572–594 (FECS…QRTH), 600–622 (YKCI…QRIH), 628–650 (YTCH…LRTH), and 656–678 (YKCS…QRTH).

It belongs to the krueppel C2H2-type zinc-finger protein family. Interacts with a number of proteins involved in chromatin modification and transcriptional corepression including DNMT1, DNMT3A, HDAC2, PHF8, TRIM28/KAP1, SETDB1, EZH2, UHRF1, CBX3/HP1-gamma, and CBX5/HP1-alpha; recruits these proteins to the SIX3 promoter region, leading to SIX3 transcriptional repression. Interacts with MAPK3/ERK1 and MAPK1/ERK2. Ubiquitinated, leading to proteasomal degradation. As to expression, expressed in Purkinje cells in the brain (at protein level).

It localises to the nucleus. Its function is as follows. Transcription factor that binds to the consensus sequence 5'-TCCTCCC-3' and acts as a transcriptional repressor. Binds to the promoter region of SIX3 and recruits other proteins involved in chromatin modification and transcriptional corepression, resulting in methylation of the promoter and transcriptional repression. Acts as a transcriptional repressor of HS3ST1 and HS3ST3A1 via binding to gene promoter regions. In Mus musculus (Mouse), this protein is Zinc finger protein 263.